We begin with the raw amino-acid sequence, 96 residues long: Co-chaperonin GroES (96 aa).

The protein belongs to the GroES chaperonin family. Heptamer of 7 subunits arranged in a ring. Interacts with the chaperonin GroEL.

The protein localises to the cytoplasm. Its function is as follows. Together with the chaperonin GroEL, plays an essential role in assisting protein folding. The GroEL-GroES system forms a nano-cage that allows encapsulation of the non-native substrate proteins and provides a physical environment optimized to promote and accelerate protein folding. GroES binds to the apical surface of the GroEL ring, thereby capping the opening of the GroEL channel. The sequence is that of Co-chaperonin GroES from Geotalea daltonii (strain DSM 22248 / JCM 15807 / FRC-32) (Geobacter daltonii).